An 872-amino-acid polypeptide reads, in one-letter code: DNA mismatch repair protein MutS (872 aa).

Residue 622–629 participates in ATP binding; it reads GPNMAGKS.

This sequence belongs to the DNA mismatch repair MutS family.

Functionally, this protein is involved in the repair of mismatches in DNA. It is possible that it carries out the mismatch recognition step. This protein has a weak ATPase activity. This Geobacter metallireducens (strain ATCC 53774 / DSM 7210 / GS-15) protein is DNA mismatch repair protein MutS.